The sequence spans 397 residues: Corticosteroid-binding globulin (397 aa).

An N-terminal signal peptide occupies residues 1 to 22 (MSLALYTCLFWLCTSGLWTTQA). Asn89, Asn169, Asn217, and Asn232 each carry an N-linked (GlcNAc...) asparagine glycan. Residue Gln247 coordinates cortisol. Asn253 carries an N-linked (GlcNAc...) asparagine glycan. Asp279 provides a ligand contact to cortisol. Asn320 carries N-linked (GlcNAc...) asparagine glycosylation. Residue Trp385 participates in cortisol binding.

The protein belongs to the serpin family. Expressed by the liver; secreted in plasma.

The protein resides in the secreted. Functionally, major transport protein for glucocorticoids and progestins in the blood of almost all vertebrate species. The chain is Corticosteroid-binding globulin (Serpina6) from Mus musculus (Mouse).